Here is a 791-residue protein sequence, read N- to C-terminus: Cytochrome c oxidase polypeptide I+III (791 aa).

Positions 1–473 are COX1; the sequence is MAITAKPKAG…LLSTIGAYIL (473 aa). The chain crosses the membrane as a helical span at residues 29 to 49; that stretch reads LMYTATAFFAFALAGVFSLLI. Residue H73 participates in Fe(II)-heme a binding. 17 consecutive transmembrane segments (helical) span residues 78 to 98, 111 to 131, 155 to 175, 201 to 221, 244 to 264, 282 to 302, 312 to 332, 347 to 367, 381 to 401, 423 to 443, 464 to 484, 566 to 586, 617 to 637, 657 to 677, 691 to 711, 729 to 749, and 771 to 791; these read LFFFIIQAGLTGFGNFVVPLM, AFSYWAFLGAIVLALMSYFFP, FYLAAILLLGFSSLLGNANFV, ASVLNLFSLAGLTAATLLVLL, FFWFYSHPTVYVMLLPYLGIL, MVWAQMGIVVLGTMVWAHHMF, IAFAFFTALIAVPTGVKLFNI, LYWVLGFIFNFLLGGITGVML, FVVAHFHNVLMAGSGFGAFAG, FWLFLVGYLLTFLPQYALGYL, LLSTIGAYILGLGGLVWIYTM, FAFFVAVAALPVPNVWMWVFL, AWMGMAWFIVSEVGLFAILIA, LWLALLNTFLLVSSSFTVHFA, FGLLVTIILGVLFFLVQSWEF, FFTIVGLHGLHVVIGGFGLIL, and SMYWHLVDAVWLVIVTIFYVW. 4 residues coordinate Cu cation: H250, Y254, H299, and H300. The segment at residues 250 to 254 is a cross-link (1'-histidyl-3'-tyrosine (His-Tyr)); the sequence is HPTVY. H385 serves as a coordination point for heme a3. Residue H387 coordinates Fe(II)-heme a. Residues 545 to 791 are COX3; the sequence is DPAHIHLPNS…LVIVTIFYVW (247 aa).

The protein in the N-terminal section; belongs to the heme-copper respiratory oxidase family. It in the C-terminal section; belongs to the cytochrome c oxidase subunit 3 family. Possibly a heterodimer of A-protein (contains: cytochrome c oxidase subunits I and III) and subunit II. The A-protein could also present a precursor form of subunits I and III. It depends on Cu(2+) as a cofactor. Requires heme as cofactor.

Its subcellular location is the cell membrane. The enzyme catalyses 4 Fe(II)-[cytochrome c] + O2 + 8 H(+)(in) = 4 Fe(III)-[cytochrome c] + 2 H2O + 4 H(+)(out). It participates in energy metabolism; oxidative phosphorylation. Its function is as follows. Cytochrome c oxidase is the component of the respiratory chain that catalyzes the reduction of oxygen to water. Subunits 1-3 form the functional core of the enzyme complex. Co I is the catalytic subunit of the enzyme. Electrons originating in cytochrome c are transferred via the copper A center of subunit 2 and heme a of subunit 1 to the bimetallic center formed by heme a3 and copper B. This cytochrome c oxidase shows proton pump activity across the membrane in addition to the electron transfer. The polypeptide is Cytochrome c oxidase polypeptide I+III (caaA) (Thermus thermophilus (strain ATCC 27634 / DSM 579 / HB8)).